The following is a 172-amino-acid chain: MSFVPPATEVLIVADCWQAESEAEAVVLRAIEAAAAMVDAETADAELAVMLSDDAGVRTLNANWRGLDKPTNVLSFPALQPSATMPDDAPRMLGDIAIAYETTRREADDEGKPFDHHLSHLAVHGFLHLVGYDHETESEAEAMEQLERRILAQLGVPDPYADQDRADQDRVN.

Zn(2+) contacts are provided by His124, His128, and His134.

Belongs to the endoribonuclease YbeY family. Zn(2+) is required as a cofactor.

The protein resides in the cytoplasm. Functionally, single strand-specific metallo-endoribonuclease involved in late-stage 70S ribosome quality control and in maturation of the 3' terminus of the 16S rRNA. This is Endoribonuclease YbeY from Rhodopseudomonas palustris (strain BisA53).